Reading from the N-terminus, the 400-residue chain is CinA-like protein (400 aa).

This sequence belongs to the CinA family.

The protein is CinA-like protein of Escherichia coli (strain SE11).